Consider the following 302-residue polypeptide: uncharacterized protein (302 aa).

A run of 9 helical transmembrane segments spans residues 1-21 (MSWIIFYTIIFALLVLDLGVI), 33-53 (SLLFSLFYFTISCLFGIYIYY), 67-87 (FLIEKAMSLDNIFVISIIFQF), 101-121 (FGIIGVIAFRAVMIYGGIILI), 124-144 (FSWLLYIFAVILIATGVKTFY), 185-205 (YVTPLFISLILIEAIDLVFAI), 220-240 (IIYTSNIFAILGLRALFFCLA), 253-273 (LALILIFIGIKIFIHHYIAIP), and 274-294 (AYISLTVTITLLLLGIFASVI).

The protein belongs to the TerC family.

It localises to the cell membrane. This is an uncharacterized protein from Rickettsia bellii (strain RML369-C).